The primary structure comprises 262 residues: Merozoite surface protein 2 (262 aa).

The signal sequence occupies residues 1–20 (MKVIKTLSIINFFIFVTFNI). Residues Asn22 and Asn36 are each glycosylated (N-linked (GlcNAc...) asparagine). The polymorphic region stretch occupies residues 44–188 (AESKPPTGTG…EQTESPELQS (145 aa)). The disordered stretch occupies residues 44–223 (AESKPPTGTG…DSQKECTDGN (180 aa)). A compositionally biased stretch (gly residues) spans 51–66 (GTGGSGSAGSGAGASA). Positions 67-111 (GNGANPGADAERSPSTPATPATPATTTTTTTTNDAEASTSTSSEN) are enriched in low complexity. A compositionally biased stretch (basic and acidic residues) spans 112–127 (PNHKNAETNPKGKGEV). Polar residues-rich tracts occupy residues 129 to 155 (KPNQANKETQNNSNVQQDSQTKSNVPP) and 162 to 190 (KSPTAQPEQAENSAPTAEQTESPELQSAP). Residue Asn139 is glycosylated (N-linked (GlcNAc...) asparagine). Asn211 carries an N-linked (GlcNAc...) asparagine glycan. A disulfide bond links Cys219 and Cys227. N-linked (GlcNAc...) asparagine glycans are attached at residues Asn235 and Asn236. Asn236 carries GPI-anchor amidated asparagine lipidation. Positions 237 to 262 (SSNIASINKFVVLISATLVLSFAIFI) are cleaved as a propeptide — removed in mature form.

Its subcellular location is the cell membrane. May play a role in the merozoite attachment to the erythrocyte. This is Merozoite surface protein 2 from Plasmodium falciparum (isolate Camp / Malaysia).